The following is a 716-amino-acid chain: Polyribonucleotide nucleotidyltransferase (716 aa).

Asp490 and Asp496 together coordinate Mg(2+). A KH domain is found at 556-615; that stretch reads PKIETLTIPTDKIREVIGSGGKVIREIVETSGAKVDINDDGVIKIASNDQAAIKKAYDMI. Positions 625–693 constitute an S1 motif domain; it reads GQIYTGKVVK…ERGKVRLGMK (69 aa). The segment at 695–716 is disordered; it reads VDQETGQEIQPEKKEREEAGEA. Residues 704–716 are compositionally biased toward basic and acidic residues; the sequence is QPEKKEREEAGEA.

The protein belongs to the polyribonucleotide nucleotidyltransferase family. It depends on Mg(2+) as a cofactor.

The protein resides in the cytoplasm. It catalyses the reaction RNA(n+1) + phosphate = RNA(n) + a ribonucleoside 5'-diphosphate. Involved in mRNA degradation. Catalyzes the phosphorolysis of single-stranded polyribonucleotides processively in the 3'- to 5'-direction. This Cereibacter sphaeroides (strain KD131 / KCTC 12085) (Rhodobacter sphaeroides) protein is Polyribonucleotide nucleotidyltransferase.